The following is an 897-amino-acid chain: Interference hedgehog (897 aa).

An N-terminal signal peptide occupies residues 1–26 (MSVTRGHKSTPSLLLLFLSVLTSLLA). Topologically, residues 27–702 (AIPVLQANAP…THNETFNMNP (676 aa)) are extracellular. 4 consecutive Ig-like C2-type domains span residues 40–147 (PGVR…ATIS), 148–235 (GDKI…RRLE), 244–336 (PSAA…YIQL), and 342–429 (PRIV…LQVN). Disulfide bonds link Cys-63–Cys-125, Cys-169–Cys-217, and Cys-272–Cys-320. N-linked (GlcNAc...) asparagine glycans are attached at residues Asn-96 and Asn-99. N-linked (GlcNAc...) asparagine glycosylation is found at Asn-296, Asn-351, Asn-393, and Asn-467. A disulfide bridge connects residues Cys-363 and Cys-411. The interval 434–468 (QAGDGMGTGGMGRSSNRNAHNRKQKQMVPPSAPNV) is disordered. Fibronectin type-III domains are found at residues 462 to 571 (PPSA…LQRG) and 579 to 674 (VPEL…TQRP). Heparin contacts are provided by Arg-498, Lys-504, and Lys-506. Residue Asn-530 is glycosylated (N-linked (GlcNAc...) asparagine). Arg-545 provides a ligand contact to heparin. Asn-561 carries N-linked (GlcNAc...) asparagine glycosylation. The span at 666-682 (LKQGRTQRPRSSTTAQP) shows a compositional bias: polar residues. The disordered stretch occupies residues 666–694 (LKQGRTQRPRSSTTAQPTMHTVDTTTPTH). Positions 683-694 (TMHTVDTTTPTH) are enriched in low complexity. N-linked (GlcNAc...) asparagine glycosylation occurs at Asn-695. Residues 703-723 (LLTGTISGGALLILLVISACL) traverse the membrane as a helical segment. Topologically, residues 724–897 (CLCKRRHSRG…SSGSLNSVGV (174 aa)) are cytoplasmic. Disordered stretches follow at residues 773-793 (AQQQ…DSQD) and 819-849 (MSSS…NLNQ). Over residues 774 to 784 (QQQQQQLQQQH) the composition is skewed to low complexity.

Belongs to the immunoglobulin superfamily. IHOG family. Homodimer. Heterotetramer; 2 iHog chains bind 2 hh chains when facilitated by heparin, heparin is required to promote high-affinity interactions between hh and iHog.

The protein resides in the membrane. Mediates response to the active Hedgehog (Hh) protein signal in embryos, functioning upstream or at the level of patched (ptc). The sequence is that of Interference hedgehog from Drosophila mojavensis (Fruit fly).